A 248-amino-acid chain; its full sequence is Mannose-binding protein C (248 aa).

The N-terminal stretch at 1–20 is a signal peptide; it reads MSLFPSLPLLLLSMVAASYS. One can recognise a Collagen-like domain in the interval 42–99; the sequence is GINGFPGKDGRDGTKGEKGEPGQGLRGLQGPPGKLGPPGNPGPSGSPGPKGQKGDPGK. Residues 43–113 form a disordered region; the sequence is INGFPGKDGR…DSSLAASERK (71 aa). The residue at position 47 (P47) is a 4-hydroxyproline. Residues 49 to 61 show a composition bias toward basic and acidic residues; that stretch reads KDGRDGTKGEKGE. 4-hydroxyproline occurs at positions 73, 79, 82, and 88. Residues 75 to 87 are compositionally biased toward pro residues; sequence KLGPPGNPGPSGS. The span at 93–102 shows a compositional bias: basic and acidic residues; the sequence is QKGDPGKSPD. Positions 112–130 form a coiled coil; the sequence is RKALQTEMARIKKWLTFSL. The region spanning 134 to 245 is the C-type lectin domain; that stretch reads VGNKFFLTNG…CSTSHLAVCE (112 aa). 2 disulfide bridges follow: C155–C244 and C222–C236.

As to quaternary structure, oligomeric complex of 3 or more homotrimers. Interacts with MASP1 and MASP2. Interacts with MEP1A and MEP1B and may inhibit their catalytic activity. In terms of processing, hydroxylation on proline residues within the sequence motif, GXPG, is most likely to be 4-hydroxy as this fits the requirement for 4-hydroxylation in vertebrates.

Its subcellular location is the secreted. In terms of biological role, calcium-dependent lectin involved in innate immune defense. Binds mannose, fucose and N-acetylglucosamine on different microorganisms and activates the lectin complement pathway. Binds to late apoptotic cells, as well as to apoptotic blebs and to necrotic cells, but not to early apoptotic cells, facilitating their uptake by macrophages. This Gorilla gorilla gorilla (Western lowland gorilla) protein is Mannose-binding protein C (MBL2).